Here is a 168-residue protein sequence, read N- to C-terminus: Peptidyl-prolyl cis-trans isomerase-like 3 (168 aa).

The 156-residue stretch at 1-156 (MSVTLHTNVG…SEIRMTGVTV (156 aa)) folds into the PPIase cyclophilin-type domain.

This sequence belongs to the cyclophilin-type PPIase family. PPIL3 subfamily.

It carries out the reaction [protein]-peptidylproline (omega=180) = [protein]-peptidylproline (omega=0). In terms of biological role, PPIases accelerate the folding of proteins. It catalyzes the cis-trans isomerization of proline imidic peptide bonds in oligopeptides. This is Peptidyl-prolyl cis-trans isomerase-like 3 (CYP10) from Mycosarcoma maydis (Corn smut fungus).